Here is a 205-residue protein sequence, read N- to C-terminus: High frequency lysogenization protein HflD homolog (205 aa).

It belongs to the HflD family.

It localises to the cytoplasm. Its subcellular location is the cell inner membrane. The polypeptide is High frequency lysogenization protein HflD homolog (Aliivibrio fischeri (strain MJ11) (Vibrio fischeri)).